The following is a 258-amino-acid chain: Small ribosomal subunit protein mS40 (258 aa).

Residues 1–35 (MAASVLNVLLRRLPYFSPFRGAYGVQVPLQTLCTK) constitute a mitochondrion transit peptide. The residue at position 49 (Ser49) is a Phosphoserine. The disordered stretch occupies residues 221-258 (QGHLREESGPPPESMPKVPLTAPNEATSTEQAGPQSAL). Residues 244–258 (NEATSTEQAGPQSAL) show a composition bias toward polar residues.

The protein belongs to the bacterial ribosomal protein bS18 family. Mitochondrion-specific ribosomal protein mS40 subfamily. As to quaternary structure, component of the mitochondrial ribosome small subunit (28S) which comprises a 12S rRNA and about 30 distinct proteins.

It localises to the mitochondrion. The protein is Small ribosomal subunit protein mS40 of Bos taurus (Bovine).